Consider the following 255-residue polypeptide: Small ribosomal subunit protein uS2 (255 aa).

The protein belongs to the universal ribosomal protein uS2 family.

The protein is Small ribosomal subunit protein uS2 of Streptococcus thermophilus (strain ATCC BAA-491 / LMD-9).